We begin with the raw amino-acid sequence, 406 residues long: Phosphopentomutase (406 aa).

The Mn(2+) site is built by Asp10, Asp305, His310, Asp346, His347, and His358.

This sequence belongs to the phosphopentomutase family. Requires Mn(2+) as cofactor.

It is found in the cytoplasm. It carries out the reaction 2-deoxy-alpha-D-ribose 1-phosphate = 2-deoxy-D-ribose 5-phosphate. It catalyses the reaction alpha-D-ribose 1-phosphate = D-ribose 5-phosphate. It participates in carbohydrate degradation; 2-deoxy-D-ribose 1-phosphate degradation; D-glyceraldehyde 3-phosphate and acetaldehyde from 2-deoxy-alpha-D-ribose 1-phosphate: step 1/2. In terms of biological role, isomerase that catalyzes the conversion of deoxy-ribose 1-phosphate (dRib-1-P) and ribose 1-phosphate (Rib-1-P) to deoxy-ribose 5-phosphate (dRib-5-P) and ribose 5-phosphate (Rib-5-P), respectively. This is Phosphopentomutase from Rhizobium etli (strain ATCC 51251 / DSM 11541 / JCM 21823 / NBRC 15573 / CFN 42).